Here is a 693-residue protein sequence, read N- to C-terminus: MTEGEIPWGPTGELVYNRTYSRVKPDGTRETWPETVERVVSGNLALVDSRYQLPGEREDLLRLMREFKILPAGRHLWASGVKNAQHLFNCWVSGWTEKPSDHFEFTFMRLMEGGGVGANYSNRFLADYPHVKQELEVHIVCDEDHDDYADLAEAGQLSSRYDSDWVDAFVIEDSREGWAAALVDLIDTHYRDDVAHKERVYDVSRVRAAGRKLKTFGGTASGPVPLAKMLTEVSEILSRCAREGEQYRFEDGGALTGLDAMEIDHAIAQCVVAGGVRRSARMAMMHWADWQVETFTNIKQDSGSHWTTNISVEVDDAFWSLAKAPVDPLNPRSTKAHRVLKALSEGAVRNGEPGMWDSSLSNVGEPNEVVCTNPCGEITLEPWEPCNLGHINLAAFVTDAGKTDYIDLIRAHRLMTRFLIRATFSAVADPKSREVLDRNRRIGVGHLGVASYLALTGRRYSQAPGDKRFTAFLREMAAEVDRAAEEFSHELRIPVPVKKRTVAPTGTIAKMPGVSEGIHPIFSRYFIRRIRFSVLDNDQFLTASQYAADGYHVEKDQYDKSGNTWVVEIPTKDTLVEAVAARFGRDAEDIVESANELTLHQLLAFQALYQTCWADNAVSFTANVDPDAYEGVDVAADLQRFSGLIKGSTIFPEESFPQAPYERITKQQYEAAAIKAVADGVDEECANGACPIK.

Cysteines 90 and 386 form a disulfide. Catalysis depends on residues Cys375 and Glu377.

This sequence belongs to the class II ribonucleoside-triphosphate reductase family. The cofactor is adenosylcob(III)alamin.

It catalyses the reaction a 2'-deoxyribonucleoside 5'-triphosphate + [thioredoxin]-disulfide + H2O = a ribonucleoside 5'-triphosphate + [thioredoxin]-dithiol. This Mycobacterium phage D29 (Mycobacteriophage D29) protein is Putative adenosylcobalamin-dependent ribonucleoside-triphosphate reductase (50).